Consider the following 191-residue polypeptide: UPF0149 protein VC_2476 (191 aa).

It belongs to the UPF0149 family.

This Vibrio cholerae serotype O1 (strain ATCC 39315 / El Tor Inaba N16961) protein is UPF0149 protein VC_2476.